The chain runs to 59 residues: Potassium channel toxin alpha-KTx 4.7 (59 aa).

The N-terminal stretch at 1 to 22 is a signal peptide; it reads MKAFYGILIIFILISMLDLSQQ. 3 disulfides stabilise this stretch: cysteine 29-cysteine 50, cysteine 35-cysteine 55, and cysteine 39-cysteine 57. Positions 48-55 are interaction with Ca(2+)-activated K(+) channels; that stretch reads GKCMNGKC.

It belongs to the short scorpion toxin superfamily. Potassium channel inhibitor family. Alpha-KTx 04 subfamily. Expressed by the venom gland.

It localises to the secreted. Its function is as follows. Potently blocks Kv1.1/KCNA1 (85%), Kv1.2/KCNA2 (91%), Kv1.3/KCNA3 (89%), Kv1.6/KCNA6 (94%), and Shaker (97%). The protein is Potassium channel toxin alpha-KTx 4.7 of Tityus stigmurus (Brazilian scorpion).